The sequence spans 1238 residues: Receptor-type tyrosine-protein phosphatase eta (1238 aa).

Positions 1 to 28 are cleaved as a signal peptide; sequence MKPAARETRTPPRSPGLRWALLPLLLLL. At 29-876 the chain is on the extracellular side; the sequence is RQGQVLCAGA…LPQDPGVICG (848 aa). The Fibronectin type-III 1 domain occupies 39 to 122; it reads APNPIFDIEA…LNKTITTEPW (84 aa). Residues asparagine 62, asparagine 78, asparagine 85, asparagine 90, asparagine 110, asparagine 114, asparagine 145, asparagine 164, asparagine 173, asparagine 182, asparagine 198, asparagine 207, asparagine 244, asparagine 253, asparagine 267, asparagine 278, asparagine 313, asparagine 317, asparagine 333, asparagine 366, asparagine 379, asparagine 398, asparagine 403, asparagine 437, asparagine 452, asparagine 488, asparagine 506, asparagine 538, asparagine 572, asparagine 576, asparagine 662, asparagine 668, asparagine 685, asparagine 691, asparagine 725, asparagine 811, and asparagine 838 are each glycosylated (N-linked (GlcNAc...) asparagine). Residues 170–266 enclose the Fibronectin type-III 2 domain; sequence PGTNNSFAFP…GQPRNKVFKT (97 aa). 6 consecutive Fibronectin type-III domains span residues 270-358, 359-443, 444-527, 528-621, 622-718, and 717-803; these read QVSD…SPDQ, VSDF…TDPS, AVTD…TQYT, RPSS…TEPE, PVTS…TDPP, and PPTP…SEVL. A helical transmembrane segment spans residues 877 to 897; it reads AVFGCIFGALAITAVGGFIFW. Residues 898-1238 are Cytoplasmic-facing; it reads RKKRTDAKNN…MFGKTNGYIA (341 aa). Serine 910 is modified (phosphoserine). Residues 942-1199 form the Tyrosine-protein phosphatase domain; the sequence is FAEEYEDLKL…VFLNQCVLDI (258 aa). Residues aspartate 1106, 1140-1146, and glutamine 1184 contribute to the substrate site; that span reads CSAGVGR. The active-site Phosphocysteine intermediate is the cysteine 1140.

It belongs to the protein-tyrosine phosphatase family. Receptor class 3 subfamily. As to quaternary structure, monomer. Interacts with CTNNB1 (phosphorylated) and JUP (phosphorylated). Interacts with FLT3 (phosphorylated). Interacts with GAB1 and GRB2. In terms of tissue distribution, expressed at high levels in brain, kidney, spleen and intestine, and at lower levels in liver, lung, thymus and heart. Expressed at a high level in the myeloid cell line FDC-P2, and at a lower level in the pre-B lymphoid cell line WEHI-231 and the T hybridoma cell line HB21.7.31. Not expressed in the fibroblast cell line NIH3T3 or the erythroid cell line F5-5. Expressed in macrophages.

Its subcellular location is the cell membrane. It localises to the cell projection. The protein localises to the ruffle membrane. It is found in the cell junction. It carries out the reaction O-phospho-L-tyrosyl-[protein] + H2O = L-tyrosyl-[protein] + phosphate. Functionally, tyrosine phosphatase which dephosphorylates or contributes to the dephosphorylation of CTNND1, FLT3, PDGFRB, MET, KDR, LYN, SRC, MAPK1, MAPK3, EGFR, TJP1, OCLN, PIK3R1 and PIK3R2. Plays a role in cell adhesion, migration, proliferation and differentiation. Has a role in megakaryocytes and platelet formation. Involved in vascular development. May be involved in the mechanism of contact inhibition of cell growth. Regulator of macrophage adhesion and spreading. Positively affects cell-matrix adhesion. Positive regulator of platelet activation and thrombosis. Negative regulator of cell proliferation. Negative regulator of PDGF-stimulated cell migration; through dephosphorylation of PDGFR. Positive regulator of endothelial cell survival, as well as of VEGF-induced SRC and AKT activation; through KDR dephosphorylation. Negative regulator of EGFR signaling pathway; through EGFR dephosphorylation. Enhances the barrier function of epithelial junctions during reassembly. Negatively regulates T-cell receptor (TCR) signaling. Upon T-cell TCR activation, it is up-regulated and excluded from the immunological synapses, while upon T-cell-antigen presenting cells (APC) disengagement, it is no longer excluded and can dephosphorylate PLCG1 and LAT to down-regulate prolongation of signaling. In Mus musculus (Mouse), this protein is Receptor-type tyrosine-protein phosphatase eta (Ptprj).